A 321-amino-acid polypeptide reads, in one-letter code: L-carnitine dehydrogenase (321 aa).

14 to 19 (GSGVIG) serves as a coordination point for NAD(+). Residues 317–321 (MTFSE) are important for catalytic activity.

This sequence belongs to the 3-hydroxyacyl-CoA dehydrogenase family. L-carnitine dehydrogenase subfamily. In terms of assembly, homodimer.

It is found in the cytoplasm. It catalyses the reaction carnitine + NAD(+) = 3-dehydrocarnitine + NADH + H(+). The protein operates within amine and polyamine metabolism; carnitine metabolism. Its activity is regulated as follows. The enzyme activity is strongly inhibited by Ag(+), Ni(+), Hg(+), and p-chloromercuribenzoate, and partially inhibited by Li(+), Ca(2+), Mn(2+), Co(2+), Cu(2+), and Zn(2+). Functionally, catalyzes the NAD(+)-dependent oxidation of L-carnitine to 3-dehydrocarnitine. Is specific for L-carnitine and NAD(+) as substrates since D-carnitine, other carnitine analogs such as choline and betaine, and NADP(+) are not substrates. Despite a high similarity to 3-hydroxyacyl-CoA dehydrogenases, cannot dehydrogenate 3-hydroxybutylate and 3-hydroxybutyl-CoA. Is probably involved in a L-carnitine degradation pathway that allows Pseudomonas sp. strain NBRC 13558 to grow on L-carnitine as the sole source of carbon and nitrogen. This Pseudomonas sp protein is L-carnitine dehydrogenase.